A 205-amino-acid chain; its full sequence is Methyltransferase-like 26 B (205 aa).

Belongs to the UPF0585 family.

This is Methyltransferase-like 26 B from Danio rerio (Zebrafish).